We begin with the raw amino-acid sequence, 301 residues long: GTPase Era (301 aa).

An Era-type G domain is found at 7 to 173; that stretch reads KSGFVALLGR…LNTINKYLPE (167 aa). Positions 15-22 are G1; that stretch reads GRPNVGKS. Residue 15-22 coordinates GTP; that stretch reads GRPNVGKS. The interval 41–45 is G2; the sequence is QTTRN. A G3 region spans residues 62–65; the sequence is DTPG. GTP-binding positions include 62–66 and 123–126; these read DTPGI and NKVD. Positions 123–126 are G4; sequence NKVD. The interval 152-154 is G5; the sequence is ISA. Positions 204–281 constitute a KH type-2 domain; that stretch reads TSQEVPHATA…NLRLWVKVQH (78 aa).

It belongs to the TRAFAC class TrmE-Era-EngA-EngB-Septin-like GTPase superfamily. Era GTPase family. In terms of assembly, monomer.

It localises to the cytoplasm. It is found in the cell membrane. In terms of biological role, an essential GTPase that binds both GDP and GTP, with rapid nucleotide exchange. Plays a role in 16S rRNA processing and 30S ribosomal subunit biogenesis and possibly also in cell cycle regulation and energy metabolism. The chain is GTPase Era from Lactobacillus helveticus (strain DPC 4571).